A 385-amino-acid polypeptide reads, in one-letter code: Chaperone protein DnaJ (385 aa).

One can recognise a J domain in the interval 5-70; it reads DYYEILEITR…SKRQIYDKYG (66 aa). The CR-type zinc finger occupies 136 to 213; the sequence is GCKKEIHNSF…CKGSGFEISE (78 aa). Zn(2+) is bound by residues C149, C152, C165, C168, C187, C190, C201, and C204. CXXCXGXG motif repeat units follow at residues 149-156, 165-172, 187-194, and 201-208; these read CSDCKGTG, CKDCGGKG, CPTCKGEG, and CSKCKGSG.

It belongs to the DnaJ family. As to quaternary structure, homodimer. Zn(2+) serves as cofactor.

The protein localises to the cytoplasm. Its function is as follows. Participates actively in the response to hyperosmotic and heat shock by preventing the aggregation of stress-denatured proteins and by disaggregating proteins, also in an autonomous, DnaK-independent fashion. Unfolded proteins bind initially to DnaJ; upon interaction with the DnaJ-bound protein, DnaK hydrolyzes its bound ATP, resulting in the formation of a stable complex. GrpE releases ADP from DnaK; ATP binding to DnaK triggers the release of the substrate protein, thus completing the reaction cycle. Several rounds of ATP-dependent interactions between DnaJ, DnaK and GrpE are required for fully efficient folding. Also involved, together with DnaK and GrpE, in the DNA replication of plasmids through activation of initiation proteins. This is Chaperone protein DnaJ from Helicobacter hepaticus (strain ATCC 51449 / 3B1).